Consider the following 227-residue polypeptide: Esterase OVCA2 (227 aa).

Active-site charge relay system residues include Ser120, Asp180, and His207.

It belongs to the LovG family.

The enzyme catalyses a carboxylic ester + H2O = an alcohol + a carboxylate + H(+). In terms of biological role, exhibits ester hydrolase activity with a strong preference for long-chain alkyl ester substrates and high selectivity against a variety of short, branched, and substituted esters. Is able to hydrolyze ester bonds within a wide range of p-nitrophenyl derivatives (C2-C14) in vitro, with a strong preference toward substrates of &gt;8 carbons. This is Esterase OVCA2 (ovca2) from Danio rerio (Zebrafish).